We begin with the raw amino-acid sequence, 611 residues long: Dihydroxy-acid dehydratase (611 aa).

A Mg(2+)-binding site is contributed by aspartate 81. Cysteine 122 provides a ligand contact to [2Fe-2S] cluster. Residues aspartate 123 and lysine 124 each coordinate Mg(2+). The residue at position 124 (lysine 124) is an N6-carboxylysine. Cysteine 195 lines the [2Fe-2S] cluster pocket. Glutamate 491 contacts Mg(2+). The active-site Proton acceptor is serine 517.

This sequence belongs to the IlvD/Edd family. In terms of assembly, homodimer. The cofactor is [2Fe-2S] cluster. Mg(2+) serves as cofactor.

The enzyme catalyses (2R)-2,3-dihydroxy-3-methylbutanoate = 3-methyl-2-oxobutanoate + H2O. The catalysed reaction is (2R,3R)-2,3-dihydroxy-3-methylpentanoate = (S)-3-methyl-2-oxopentanoate + H2O. The protein operates within amino-acid biosynthesis; L-isoleucine biosynthesis; L-isoleucine from 2-oxobutanoate: step 3/4. It functions in the pathway amino-acid biosynthesis; L-valine biosynthesis; L-valine from pyruvate: step 3/4. Functionally, functions in the biosynthesis of branched-chain amino acids. Catalyzes the dehydration of (2R,3R)-2,3-dihydroxy-3-methylpentanoate (2,3-dihydroxy-3-methylvalerate) into 2-oxo-3-methylpentanoate (2-oxo-3-methylvalerate) and of (2R)-2,3-dihydroxy-3-methylbutanoate (2,3-dihydroxyisovalerate) into 2-oxo-3-methylbutanoate (2-oxoisovalerate), the penultimate precursor to L-isoleucine and L-valine, respectively. This Brucella canis (strain ATCC 23365 / NCTC 10854 / RM-666) protein is Dihydroxy-acid dehydratase.